The chain runs to 221 residues: GTP cyclohydrolase III (221 aa).

It belongs to the archaeal-type GTP cyclohydrolase family.

The catalysed reaction is GTP + 3 H2O = 2-amino-5-formylamino-6-(5-phospho-D-ribosylamino)pyrimidin-4(3H)-one + 2 phosphate + 2 H(+). Its function is as follows. Catalyzes the formation of 2-amino-5-formylamino-6-ribofuranosylamino-4(3H)-pyrimidinone ribonucleotide monophosphate and inorganic phosphate from GTP. Also has an independent pyrophosphate phosphohydrolase activity. The chain is GTP cyclohydrolase III from Pyrobaculum calidifontis (strain DSM 21063 / JCM 11548 / VA1).